The chain runs to 206 residues: dITP/XTP pyrophosphatase (206 aa).

Residue 7-12 coordinates substrate; the sequence is SNNAKK. The active-site Proton acceptor is the Asp-72. Residue Asp-72 coordinates Mg(2+). Substrate contacts are provided by residues Ser-73, 155 to 158, Lys-182, and 187 to 188; these read FGYD and HR.

It belongs to the HAM1 NTPase family. Homodimer. Mg(2+) serves as cofactor.

The catalysed reaction is XTP + H2O = XMP + diphosphate + H(+). The enzyme catalyses dITP + H2O = dIMP + diphosphate + H(+). It carries out the reaction ITP + H2O = IMP + diphosphate + H(+). Functionally, pyrophosphatase that catalyzes the hydrolysis of nucleoside triphosphates to their monophosphate derivatives, with a high preference for the non-canonical purine nucleotides XTP (xanthosine triphosphate), dITP (deoxyinosine triphosphate) and ITP. Seems to function as a house-cleaning enzyme that removes non-canonical purine nucleotides from the nucleotide pool, thus preventing their incorporation into DNA/RNA and avoiding chromosomal lesions. The sequence is that of dITP/XTP pyrophosphatase from Corynebacterium glutamicum (strain R).